Here is a 325-residue protein sequence, read N- to C-terminus: Forkhead box protein B1 (325 aa).

Positions 12-103 (QKPPYSYISL…GDMFENGSFL (92 aa)) form a DNA-binding region, fork-head. Positions 284–309 (LSNSPPSLSPTSSQTATSQSSPATPS) are enriched in low complexity. The interval 284-325 (LSNSPPSLSPTSSQTATSQSSPATPSETLTSPASALHSVAVH) is disordered.

Its subcellular location is the nucleus. Functionally, transcription factor expressed by neural progenitor cells in specific regions of the embryonic neuroepithelium. Essential for the mammillary nuclei maintenance. Negatively regulates the proliferation of oligodendrocyte progenitors and promotes oligodendrocyte maturation. Also expressed in mammary glands, plays a role in lactation, controls development of mammary glands and the inferior colliculi of the midbrain in the central nervous system that regulates the milk-ejection reflex. The protein is Forkhead box protein B1 (FOXB1) of Homo sapiens (Human).